The sequence spans 130 residues: Cyclin-dependent kinase 4 inhibitor B (130 aa).

4 ANK repeats span residues 5–34 (SSDA…DPNA), 38–66 (FGRR…EPNC), 71–100 (TLTR…RLDV), and 104–130 (WGRL…ATGD). Thr12 carries the phosphothreonine modification.

It belongs to the CDKN2 cyclin-dependent kinase inhibitor family. As to quaternary structure, heterodimer of CDKN2B with CDK4 or CDK6. As to expression, expressed ubiquitously.

Its function is as follows. Interacts strongly with CDK4 and CDK6. Potent inhibitor. Potential effector of TGF-beta induced cell cycle arrest. The sequence is that of Cyclin-dependent kinase 4 inhibitor B (Cdkn2b) from Mus musculus (Mouse).